Here is a 400-residue protein sequence, read N- to C-terminus: Argininosuccinate synthase (400 aa).

ATP is bound by residues 11–19 (AYSGGLDTS) and alanine 38. The L-citrulline site is built by tyrosine 89 and serine 94. Glycine 119 is an ATP binding site. L-aspartate-binding residues include threonine 121, asparagine 125, and aspartate 126. L-citrulline is bound at residue asparagine 125. The L-citrulline site is built by arginine 129, serine 179, serine 188, glutamate 264, and tyrosine 276.

This sequence belongs to the argininosuccinate synthase family. Type 1 subfamily. In terms of assembly, homotetramer.

The protein localises to the cytoplasm. It carries out the reaction L-citrulline + L-aspartate + ATP = 2-(N(omega)-L-arginino)succinate + AMP + diphosphate + H(+). It participates in amino-acid biosynthesis; L-arginine biosynthesis; L-arginine from L-ornithine and carbamoyl phosphate: step 2/3. The sequence is that of Argininosuccinate synthase from Oleidesulfovibrio alaskensis (strain ATCC BAA-1058 / DSM 17464 / G20) (Desulfovibrio alaskensis).